The primary structure comprises 652 residues: DNA ligase (652 aa).

Residues 29–33 (DSDYD), 78–79 (SL), and glutamate 107 each bind NAD(+). The active-site N6-AMP-lysine intermediate is lysine 109. Residues arginine 130, glutamate 164, lysine 278, and lysine 302 each coordinate NAD(+). 4 residues coordinate Zn(2+): cysteine 395, cysteine 398, cysteine 413, and cysteine 418. Residues 577-652 (NSDAALFGLT…IEDEDWLRQL (76 aa)) form the BRCT domain.

It belongs to the NAD-dependent DNA ligase family. LigA subfamily. The cofactor is Mg(2+). Mn(2+) serves as cofactor.

The enzyme catalyses NAD(+) + (deoxyribonucleotide)n-3'-hydroxyl + 5'-phospho-(deoxyribonucleotide)m = (deoxyribonucleotide)n+m + AMP + beta-nicotinamide D-nucleotide.. DNA ligase that catalyzes the formation of phosphodiester linkages between 5'-phosphoryl and 3'-hydroxyl groups in double-stranded DNA using NAD as a coenzyme and as the energy source for the reaction. It is essential for DNA replication and repair of damaged DNA. This chain is DNA ligase, found in Streptococcus pyogenes serotype M4 (strain MGAS10750).